Here is a 607-residue protein sequence, read N- to C-terminus: BTB/POZ domain-containing protein DOT3 (607 aa).

The region spanning threonine 52 to proline 121 is the BTB domain. The NPH3 domain occupies arginine 211–serine 487. Position 428 is a phosphotyrosine (tyrosine 428). Disordered regions lie at residues aspartate 498–asparagine 520 and lysine 573–serine 607. Basic and acidic residues-rich tracts occupy residues lysine 499–asparagine 520 and threonine 577–glutamate 586. Residues arginine 511–asparagine 563 are a coiled coil.

It belongs to the NPH3 family. As to expression, expressed in emerging leaf primordia.

The protein operates within protein modification; protein ubiquitination. In terms of biological role, may act as a substrate-specific adapter of an E3 ubiquitin-protein ligase complex (CUL3-RBX1-BTB) which mediates the ubiquitination and subsequent proteasomal degradation of target proteins. Involved in leaf vasculature patterning. This Arabidopsis thaliana (Mouse-ear cress) protein is BTB/POZ domain-containing protein DOT3.